Reading from the N-terminus, the 1141-residue chain is MDALRKLGSLGRRRDEVDTASSPLKNEASAAEIPRDPVQISGKDEASPSGLTPIRVRVPEDVRSESEVKRDGDEESVGSGESFDSALERMEASSITSFEPPSPMESIDGRFQFEDGVREDLAESGLDGNFSYDDDDDDEEEEEDGSEEGESTSSSIINSEYSSSASNTEDEMDISGYGASSARTMLVSNDASKSDEEAIDEPKYKLRNVVTGEENMSGGLSVENEARGVALSSWKSELEDFYEASLEDNDVQEELAEKIIKVASEQNDEEDEEVHFPVIANELPGRITRNRTMIDSPAHLYSAVKAVDSTLPALKSESTKSITQGFVEAEEAESDVFTEGEDGYDDEDEDGDIQMDVSQATEKSGTPDESESNPSMGAGGPRLPSLPQRSSARRSAATTATGVPRPNTASSTQSAATSDASISSESSEANEIREKLQNIRIKFLRLARRLNQSPQNVVVAQVLYRLGLAESLRGGSSLNRTRAFSFDHANALAEEQEAAKYEDLDFACTILVLGKTGVGKSATINSIFDECKTVTSAYYPSTTKVHEVSGTVLGVKVRFIDTPGLLPSTADQRHNKNIMRQVKKYIKKVSPDIVLYFDRMDMQTRDSGDVPLLRTITDVFGAAVWFNATVVLTHASKAPPDGSNGTPMSYDYFVAQRSHFVQQTIRQAAGDARLQNPVSLVENHPACRINRSGQRVLPNGQPWKQQLLLLCFASKILAEANTLLKLQEASTPGKPFGQRSRVPPLPYLLSSLLQSRAQLKMPDEQHGESEDSDDDSDEEDEEEGDEYDDLPPFRPLSKQELEDLSKEQRQEYAEELADRERLFQKKQYREQIRRRRERKKQASVMSKEEPSIPGDGAEDESGQPATVAVPMPDMALPPSFDSDNPTHRYRYLETANQWLVRPVLETHGWDHDAGYDGFNVEKMFVVKEKIPASVSGQVTKDKKEAQVNFEAAASLRHGEGKVTLTGFDVQTIGKDLAYTVRAETRFNNFKRNKTTAGVTATYLNDTIAAGVKLEDRVLIGKRVKLVVNGGVLTGKGDKAYGGSLEATLRGKEYPLSRTLSTLGLSVMDWHGDLAIGGNLQSQFMVGKTMMVGRANLNNRGSGQVSIRASSSEQLQMVLIGIVPILRSLINCRFGFGGQPQQ.

Disordered stretches follow at residues 1-177 (MDAL…ISGY) and 325-431 (GFVE…EANE). Basic and acidic residues-rich tracts occupy residues 57-72 (RVPEDVRSESEVKRDG) and 107-121 (IDGRFQFEDGVREDL). Over residues 132–150 (YDDDDDDEEEEEDGSEEGE) the composition is skewed to acidic residues. A compositionally biased stretch (low complexity) spans 151–167 (STSSSIINSEYSSSASN). Residues 328–353 (EAEEAESDVFTEGEDGYDDEDEDGDI) show a composition bias toward acidic residues. Low complexity-rich tracts occupy residues 389 to 401 (RSSARRSAATTAT) and 408 to 429 (TASSTQSAATSDASISSESSEA). In terms of domain architecture, AIG1-type G spans 505 to 734 (DFACTILVLG…KLQEASTPGK (230 aa)). The tract at residues 514–521 (GKTGVGKS) is G1. 517 to 522 (GVGKSA) is a binding site for GTP. Ser-521 provides a ligand contact to Mg(2+). The G2 stretch occupies residues 541 to 545 (STTKV). The interval 561–564 (DTPG) is G3. A G4 region spans residues 633–636 (THAS). GTP is bound by residues His-634 and 682–683 (EN). The segment at 682-684 (ENH) is G5. Disordered regions lie at residues 758–795 (QLKMPDEQHGESEDSDDDSDEEDEEEGDEYDDLPPFRP) and 832–871 (IRRRRERKKQASVMSKEEPSIPGDGAEDESGQPATVAVPM). Residues 770-789 (EDSDDDSDEEDEEEGDEYDD) show a composition bias toward acidic residues. Basic residues predominate over residues 832-841 (IRRRRERKKQ). The helical transmembrane segment at 1116–1136 (MVLIGIVPILRSLINCRFGFG) threads the bilayer.

This sequence belongs to the TRAFAC class TrmE-Era-EngA-EngB-Septin-like GTPase superfamily. AIG1/Toc34/Toc159-like paraseptin GTPase family. TOC159 subfamily. As to quaternary structure, part of the TOC core complex. Mg(2+) serves as cofactor.

It is found in the plastid. The protein resides in the chloroplast outer membrane. Functionally, GTPase involved in protein precursor import into chloroplasts. Seems to recognize chloroplast-destined precursor proteins and regulate their presentation to the translocation channel through GTP hydrolysis. Probably specialized in the import of nuclear encoded non-photosynthetic preproteins from the cytoplasm to the chloroplast. In Physcomitrium patens (Spreading-leaved earth moss), this protein is Translocase of chloroplast 125, chloroplastic.